An 860-amino-acid polypeptide reads, in one-letter code: Leucine--tRNA ligase (860 aa).

The 'HIGH' region motif lies at 42 to 52 (PYPSGRLHMGH). Positions 619-623 (KMSKS) match the 'KMSKS' region motif. K622 provides a ligand contact to ATP.

The protein belongs to the class-I aminoacyl-tRNA synthetase family.

It localises to the cytoplasm. It carries out the reaction tRNA(Leu) + L-leucine + ATP = L-leucyl-tRNA(Leu) + AMP + diphosphate. This is Leucine--tRNA ligase from Mannheimia succiniciproducens (strain KCTC 0769BP / MBEL55E).